The primary structure comprises 246 residues: ABC transporter ATP-binding protein NatA (246 aa).

Positions 2-237 (ITLTDCSRRF…ERSEDLNYIF (236 aa)) constitute an ABC transporter domain. 38-45 (GENGAGKT) contacts ATP.

Belongs to the ABC transporter superfamily. In terms of assembly, the complex is composed of NatA and NatB.

The catalysed reaction is Na(+)(in) + ATP + H2O = Na(+)(out) + ADP + phosphate + H(+). Its function is as follows. Part of an ABC transporter that catalyzes ATP-dependent electrogenic sodium extrusion. This Bacillus subtilis (strain 168) protein is ABC transporter ATP-binding protein NatA.